Here is a 423-residue protein sequence, read N- to C-terminus: Histidine--tRNA ligase (423 aa).

The protein belongs to the class-II aminoacyl-tRNA synthetase family. Homodimer.

The protein resides in the cytoplasm. It catalyses the reaction tRNA(His) + L-histidine + ATP = L-histidyl-tRNA(His) + AMP + diphosphate + H(+). The protein is Histidine--tRNA ligase of Phytoplasma mali (strain AT).